The following is a 384-amino-acid chain: Chaperone protein DnaJ (384 aa).

The region spanning 5 to 69 (DYYKVLGVDR…QKRAQYDQFG (65 aa)) is the J domain. The CR-type zinc-finger motif lies at 141 to 223 (GKKTQVSYTR…CGGKGTVERK (83 aa)). C154, C157, C171, C174, C197, C200, C211, and C214 together coordinate Zn(2+). 4 CXXCXGXG motif repeats span residues 154–161 (CETCGGNG), 171–178 (CDKCHGTG), 197–204 (CDKCNGRG), and 211–218 (CKTCGGKG).

It belongs to the DnaJ family. In terms of assembly, homodimer. Zn(2+) is required as a cofactor.

It is found in the cytoplasm. In terms of biological role, participates actively in the response to hyperosmotic and heat shock by preventing the aggregation of stress-denatured proteins and by disaggregating proteins, also in an autonomous, DnaK-independent fashion. Unfolded proteins bind initially to DnaJ; upon interaction with the DnaJ-bound protein, DnaK hydrolyzes its bound ATP, resulting in the formation of a stable complex. GrpE releases ADP from DnaK; ATP binding to DnaK triggers the release of the substrate protein, thus completing the reaction cycle. Several rounds of ATP-dependent interactions between DnaJ, DnaK and GrpE are required for fully efficient folding. Also involved, together with DnaK and GrpE, in the DNA replication of plasmids through activation of initiation proteins. The sequence is that of Chaperone protein DnaJ from Lactobacillus acidophilus (strain ATCC 700396 / NCK56 / N2 / NCFM).